The primary structure comprises 166 residues: UPF0304 protein VV1_2093 (166 aa).

It belongs to the UPF0304 family.

In Vibrio vulnificus (strain CMCP6), this protein is UPF0304 protein VV1_2093.